The following is a 154-amino-acid chain: Low molecular weight protein-tyrosine-phosphatase PtpA (154 aa).

Catalysis depends on cysteine 8, which acts as the Nucleophile. Residue arginine 14 is part of the active site. The active-site Proton donor is aspartate 120.

The protein belongs to the low molecular weight phosphotyrosine protein phosphatase family. Interacts with host CORO1A. In terms of processing, phosphorylations at Tyr-122 and Tyr-123 are essential for phosphatase activity.

It localises to the secreted. It carries out the reaction O-phospho-L-tyrosyl-[protein] + H2O = L-tyrosyl-[protein] + phosphate. Its function is as follows. Secreted tyrosine phosphatase that plays a critical role during infection as a bacterial effector protein that counteracts host defenses. Required for intramacrophage survival. In Staphylococcus aureus (strain bovine RF122 / ET3-1), this protein is Low molecular weight protein-tyrosine-phosphatase PtpA (ptpA).